The chain runs to 411 residues: Serine hydroxymethyltransferase (411 aa).

Residues leucine 117 and 121-123 (GHL) each bind (6S)-5,6,7,8-tetrahydrofolate. Lysine 226 bears the N6-(pyridoxal phosphate)lysine mark. (6S)-5,6,7,8-tetrahydrofolate-binding positions include glutamate 241 and 349–351 (SPF).

It belongs to the SHMT family. In terms of assembly, homodimer. Pyridoxal 5'-phosphate serves as cofactor.

The protein localises to the cytoplasm. It catalyses the reaction (6R)-5,10-methylene-5,6,7,8-tetrahydrofolate + glycine + H2O = (6S)-5,6,7,8-tetrahydrofolate + L-serine. It participates in one-carbon metabolism; tetrahydrofolate interconversion. Its pathway is amino-acid biosynthesis; glycine biosynthesis; glycine from L-serine: step 1/1. In terms of biological role, catalyzes the reversible interconversion of serine and glycine with tetrahydrofolate (THF) serving as the one-carbon carrier. This reaction serves as the major source of one-carbon groups required for the biosynthesis of purines, thymidylate, methionine, and other important biomolecules. Also exhibits THF-independent aldolase activity toward beta-hydroxyamino acids, producing glycine and aldehydes, via a retro-aldol mechanism. The sequence is that of Serine hydroxymethyltransferase from Oceanobacillus iheyensis (strain DSM 14371 / CIP 107618 / JCM 11309 / KCTC 3954 / HTE831).